A 399-amino-acid chain; its full sequence is Probable aspartate/prephenate aminotransferase (399 aa).

L-aspartate is bound by residues glycine 39, tryptophan 125, and asparagine 175. Lysine 239 carries the N6-(pyridoxal phosphate)lysine modification. Arginine 375 contributes to the L-aspartate binding site.

This sequence belongs to the class-I pyridoxal-phosphate-dependent aminotransferase family. Homodimer. Requires pyridoxal 5'-phosphate as cofactor.

It is found in the cytoplasm. It catalyses the reaction L-aspartate + 2-oxoglutarate = oxaloacetate + L-glutamate. It carries out the reaction L-arogenate + 2-oxoglutarate = prephenate + L-glutamate. In terms of biological role, catalyzes the reversible conversion of aspartate and 2-oxoglutarate to glutamate and oxaloacetate. Can also transaminate prephenate in the presence of glutamate. This Rickettsia prowazekii (strain Madrid E) protein is Probable aspartate/prephenate aminotransferase (aatA).